The primary structure comprises 584 residues: J protein JJJ2 (584 aa).

Residues 13 to 77 (TYYSILGLTS…DQKLRYDRDL (65 aa)) form the J domain. Positions 216–312 (YSEDPNSCLG…FSSGSHDSNL (97 aa)) are disordered. S229 is subject to Phosphoserine. The span at 241–253 (QQQQQQQQQQQQQ) shows a compositional bias: low complexity. Residues 269-282 (KDNKESKRESRVSP) show a composition bias toward basic and acidic residues. The segment covering 299 to 312 (KTSTFSSGSHDSNL) has biased composition (polar residues).

The protein resides in the cytoplasm. It is found in the nucleus. The chain is J protein JJJ2 (JJJ2) from Saccharomyces cerevisiae (strain YJM789) (Baker's yeast).